The chain runs to 72 residues: Translational regulator CsrA (72 aa).

This sequence belongs to the CsrA/RsmA family. In terms of assembly, homodimer; the beta-strands of each monomer intercalate to form a hydrophobic core, while the alpha-helices form wings that extend away from the core.

Its subcellular location is the cytoplasm. In terms of biological role, a translational regulator that binds mRNA to regulate translation initiation and/or mRNA stability. Usually binds in the 5'-UTR at or near the Shine-Dalgarno sequence preventing ribosome-binding, thus repressing translation. Its main target seems to be the major flagellin gene, while its function is anatagonized by FliW. This chain is Translational regulator CsrA, found in Clostridium botulinum (strain ATCC 19397 / Type A).